A 168-amino-acid polypeptide reads, in one-letter code: MTALDIQISVEAGDWPPEDELQSFSEVVLEAAADFLAREERQPLSAEAAELSLVFTDDQSIKAINAEWRGQDKPTNVLSFPAFPVTPGKMPGLMLGDIVVAHETLRREAAELEKPFDAHLTHLLVHGFLHLFGYDHIEDDEAERMERLETRILARLGLSDPYGDLPPV.

Zn(2+)-binding residues include histidine 126, histidine 130, and histidine 136.

This sequence belongs to the endoribonuclease YbeY family. Zn(2+) is required as a cofactor.

The protein resides in the cytoplasm. Single strand-specific metallo-endoribonuclease involved in late-stage 70S ribosome quality control and in maturation of the 3' terminus of the 16S rRNA. This chain is Endoribonuclease YbeY, found in Sinorhizobium medicae (strain WSM419) (Ensifer medicae).